The following is a 255-amino-acid chain: 3-deoxy-manno-octulosonate cytidylyltransferase (255 aa).

It belongs to the KdsB family.

The protein resides in the cytoplasm. The enzyme catalyses 3-deoxy-alpha-D-manno-oct-2-ulosonate + CTP = CMP-3-deoxy-beta-D-manno-octulosonate + diphosphate. Its pathway is nucleotide-sugar biosynthesis; CMP-3-deoxy-D-manno-octulosonate biosynthesis; CMP-3-deoxy-D-manno-octulosonate from 3-deoxy-D-manno-octulosonate and CTP: step 1/1. The protein operates within bacterial outer membrane biogenesis; lipopolysaccharide biosynthesis. Activates KDO (a required 8-carbon sugar) for incorporation into bacterial lipopolysaccharide in Gram-negative bacteria. This Pelobacter propionicus (strain DSM 2379 / NBRC 103807 / OttBd1) protein is 3-deoxy-manno-octulosonate cytidylyltransferase.